Consider the following 255-residue polypeptide: Sugar fermentation stimulation protein homolog (255 aa).

It belongs to the SfsA family.

The polypeptide is Sugar fermentation stimulation protein homolog (Synechococcus sp. (strain WH7803)).